The chain runs to 463 residues: Dopaminechrome tautomerase (463 aa).

The protein belongs to the major royal jelly protein family.

It localises to the secreted. The catalysed reaction is dopaminechrome = 5,6-dihydroxyindole. The protein operates within pigment biosynthesis; melanin biosynthesis. Catalyzes the conversion of dopaminechrome to 5,6-dihydroxyindole in the eumelanin biosynthetic pathway originating from dopamine. Catalyzes tautomerization of dopaminechrome to 5,6-dihydroxyindole during eumelanin biosynthesis. Acts both dopaminechrome and N-methyl dopaminechrome but not on dopachrome or other aminochromes tested. The polypeptide is Dopaminechrome tautomerase (Drosophila melanogaster (Fruit fly)).